Reading from the N-terminus, the 365-residue chain is Iron-sulfur cluster assembly protein SufC (365 aa).

The ABC transporter domain occupies Leu-118–Glu-364. An ATP-binding site is contributed by Gly-152–Ser-159.

Belongs to the ABC transporter superfamily. Ycf16 family. In terms of assembly, component of a complex composed of SufB, SufC and SufD in a stoichiometric ratio of 1:2:1. Interacts with SufB. Interacts with SufD; the interaction enhances the ATPase activity of SufC.

The protein resides in the plastid. The protein localises to the apicoplast. It catalyses the reaction ATP + H2O = ADP + phosphate + H(+). The protein operates within cofactor biosynthesis; iron-sulfur cluster biosynthesis. Participates in the sulfur mobilization (SUF) pathway for iron-sulfur (Fe-S) cluster biogenesis. As part of a complex consisting of SufB-SufC(2)-SufD, involved in assembly of [4Fe-4S] clusters. Exhibits ATPase activity. This chain is Iron-sulfur cluster assembly protein SufC, found in Plasmodium berghei (strain Anka).